The primary structure comprises 93 residues: Alpha-elapitoxin-Oh2a (93 aa).

The first 21 residues, 1–21 (MKTLLLTLVVVTIVCLDLGYT), serve as a signal peptide directing secretion. Cystine bridges form between cysteine 24/cysteine 43, cysteine 36/cysteine 64, cysteine 49/cysteine 53, cysteine 68/cysteine 79, and cysteine 80/cysteine 85.

The protein belongs to the three-finger toxin family. Long-chain subfamily. Type II alpha-neurotoxin sub-subfamily. In terms of tissue distribution, expressed by the venom gland.

It is found in the secreted. Functionally, binds with high affinity to muscular (alpha-1/CHRNA1) and neuronal (alpha-7/CHRNA7) nicotinic acetylcholine receptor (nAChR) and inhibits acetylcholine from binding to the receptor, thereby impairing neuromuscular and neuronal transmission. This is Alpha-elapitoxin-Oh2a from Ophiophagus hannah (King cobra).